The following is a 47-amino-acid chain: Defensin-like protein 1 (47 aa).

Disulfide bonds link C3–C47, C14–C36, C20–C41, and C24–C43.

This sequence belongs to the DEFL family. Protease inhibitor I18 (RTI/MTI-2) subfamily.

In Sorghum bicolor (Sorghum), this protein is Defensin-like protein 1.